The primary structure comprises 649 residues: Mitochondrial Rho GTPase 1 (649 aa).

At 1-623 (MTKETIRVVI…KPTNIDYSSA (623 aa)) the chain is on the cytoplasmic side. The Miro 1 domain maps to 3-176 (KETIRVVICG…FYLCQRSISY (174 aa)). GTP-binding positions include 12-19 (GDDGVGKT), 61-63 (DTD), and 115-118 (NKCD). EF-hand domains lie at 192–227 (SAVA…CFGK) and 320–355 (KGYR…TPGL). Residues D205, D207, D209, E216, D333, D335, D337, and E344 each coordinate Ca(2+). One can recognise a Miro 2 domain in the interval 436 to 601 (RKVFNCFVVG…FKKIIQASLE (166 aa)). GTP contacts are provided by residues 445 to 452 (GKRNSGKS), 481 to 485 (EVTGD), and 550 to 553 (LKAD). Residues 624–644 (VILGSSIGFLALFSYTMIKLL) form a helical; Anchor for type IV membrane protein membrane-spanning segment. Topologically, residues 645-649 (KPTQQ) are mitochondrial intermembrane.

Belongs to the mitochondrial Rho GTPase family.

Its subcellular location is the mitochondrion outer membrane. Its function is as follows. Mitochondrial GTPase involved in mitochondrial trafficking. Probably involved in control of anterograde transport of mitochondria and their subcellular distribution. This Candida glabrata (strain ATCC 2001 / BCRC 20586 / JCM 3761 / NBRC 0622 / NRRL Y-65 / CBS 138) (Yeast) protein is Mitochondrial Rho GTPase 1 (GEM1).